The primary structure comprises 313 residues: Ribosomal RNA small subunit methyltransferase H (313 aa).

S-adenosyl-L-methionine-binding positions include 35–37, aspartate 55, phenylalanine 80, aspartate 102, and glutamine 109; that span reads GGH.

The protein belongs to the methyltransferase superfamily. RsmH family.

It is found in the cytoplasm. It carries out the reaction cytidine(1402) in 16S rRNA + S-adenosyl-L-methionine = N(4)-methylcytidine(1402) in 16S rRNA + S-adenosyl-L-homocysteine + H(+). Specifically methylates the N4 position of cytidine in position 1402 (C1402) of 16S rRNA. This is Ribosomal RNA small subunit methyltransferase H from Shewanella woodyi (strain ATCC 51908 / MS32).